We begin with the raw amino-acid sequence, 405 residues long: S-adenosylmethionine synthase (405 aa).

139 to 144 (GQGSVD) provides a ligand contact to ATP.

This sequence belongs to the AdoMet synthase 2 family. Mg(2+) is required as a cofactor.

The catalysed reaction is L-methionine + ATP + H2O = S-adenosyl-L-methionine + phosphate + diphosphate. Its pathway is amino-acid biosynthesis; S-adenosyl-L-methionine biosynthesis; S-adenosyl-L-methionine from L-methionine: step 1/1. Catalyzes the formation of S-adenosylmethionine from methionine and ATP. This Thermococcus onnurineus (strain NA1) protein is S-adenosylmethionine synthase.